Consider the following 413-residue polypeptide: Interferon-inducible GTPase 1 (413 aa).

Residue Gly2 is the site of N-myristoyl glycine attachment. Residues 68–250 enclose the IRG-type G domain; sequence SVLNVAVTGE…PVLMDKLISD (183 aa). GDP-binding residues include Gly79, Gly81, Lys82, Ser83, Ser84, Thr102, and Gly103. Residue Thr102 is modified to (Microbial infection) Phosphothreonine; by ROP18. The residue at position 108 (Thr108) is a (Microbial infection) Phosphothreonine; by ROP18. GDP is bound by residues Lys184, Asp186, Ser187, and Asn232. Cysteines 236 and 410 form a disulfide.

Belongs to the TRAFAC class dynamin-like GTPase superfamily. IRG family. As to quaternary structure, monomer, as apoenzyme and in the GDP-bound form. Homooligomer, upon GTP binding. Interacts with HOOK3. (Microbial infection) Interacts with Toxoplasma gondii GRA7 in GTP-dependent manner; the interaction results in faster turnover of the GTP-activated IIGP1 oligomer. Interacts with T.gondii ROP5; the interaction results in inhibition of IRGA6/IIGP1 GTPase activity and oligomerization. Myristoylated. In terms of processing, (Microbial infection) Phosphorylated by Toxoplasma gondii ROP18 from virulent strains.

The protein localises to the cytoplasm. Its subcellular location is the nucleus membrane. The protein resides in the endoplasmic reticulum membrane. It localises to the golgi apparatus. It is found in the golgi stack membrane. The protein localises to the parasitophorous vacuole membrane. The enzyme catalyses GTP + H2O = GDP + phosphate + H(+). Functionally, GTPase with low activity. Has higher affinity for GDP than for GTP. Plays a role in resistance to intracellular pathogens. During infection with avirulent Toxoplasma gondii strains, recruited to the parasitophorous vacuole membrane. Required for disruption of the parasitophorous vacuole formed following T.gondii infection and subsequent killing of the parasite. Mediates resistance to Chlamydia trachomatis infection by targeting bacterial inclusions to autophagosomes for subsequent lysosomal destruction. The chain is Interferon-inducible GTPase 1 (Iigp1) from Mus musculus (Mouse).